The chain runs to 61 residues: Small ribosomal subunit protein uS14 (61 aa).

Zn(2+) is bound by residues cysteine 24, cysteine 27, cysteine 40, and cysteine 43.

Belongs to the universal ribosomal protein uS14 family. Zinc-binding uS14 subfamily. In terms of assembly, part of the 30S ribosomal subunit. Contacts proteins S3 and S10. Zn(2+) is required as a cofactor.

Binds 16S rRNA, required for the assembly of 30S particles and may also be responsible for determining the conformation of the 16S rRNA at the A site. The polypeptide is Small ribosomal subunit protein uS14 (Dehalococcoides mccartyi (strain ATCC BAA-2266 / KCTC 15142 / 195) (Dehalococcoides ethenogenes (strain 195))).